The following is a 302-amino-acid chain: 4-hydroxy-tetrahydrodipicolinate synthase (302 aa).

Threonine 46 contacts pyruvate. The active-site Proton donor/acceptor is tyrosine 135. The active-site Schiff-base intermediate with substrate is the lysine 164. Valine 206 is a pyruvate binding site.

The protein belongs to the DapA family. In terms of assembly, homotetramer; dimer of dimers.

The protein resides in the cytoplasm. The catalysed reaction is L-aspartate 4-semialdehyde + pyruvate = (2S,4S)-4-hydroxy-2,3,4,5-tetrahydrodipicolinate + H2O + H(+). It functions in the pathway amino-acid biosynthesis; L-lysine biosynthesis via DAP pathway; (S)-tetrahydrodipicolinate from L-aspartate: step 3/4. Its function is as follows. Catalyzes the condensation of (S)-aspartate-beta-semialdehyde [(S)-ASA] and pyruvate to 4-hydroxy-tetrahydrodipicolinate (HTPA). The protein is 4-hydroxy-tetrahydrodipicolinate synthase of Acidobacterium capsulatum (strain ATCC 51196 / DSM 11244 / BCRC 80197 / JCM 7670 / NBRC 15755 / NCIMB 13165 / 161).